The sequence spans 202 residues: MSTLSPRRSAILTFIRDRIAQQGQSPSLAEISEAFGFASRSVARKHIVALTEAGLIEVVAHQARGIRLLNSEPRPELLEIPVLGRVAAGAPIGPDLDIHTTLHLDRSTFTRVPDYLLRVQGDSMIEDGILDGDLVGVHRNPQASDGQIVVARLEGEVTIKRLQHRGDQLHLLPRNPAYQPIIVTPDQDFAIEGVFCGLVRRE.

Residues 28–48 constitute a DNA-binding region (H-T-H motif); that stretch reads LAEISEAFGFASRSVARKHIV. Active-site for autocatalytic cleavage activity residues include serine 123 and lysine 160.

Belongs to the peptidase S24 family. As to quaternary structure, homodimer.

The catalysed reaction is Hydrolysis of Ala-|-Gly bond in repressor LexA.. Its function is as follows. Represses a number of genes involved in the response to DNA damage (SOS response), including recA and lexA. In the presence of single-stranded DNA, RecA interacts with LexA causing an autocatalytic cleavage which disrupts the DNA-binding part of LexA, leading to derepression of the SOS regulon and eventually DNA repair. The chain is LexA repressor 2 from Pseudomonas syringae pv. tomato (strain ATCC BAA-871 / DC3000).